Reading from the N-terminus, the 505-residue chain is Aminoaldehyde dehydrogenase 2 (505 aa).

Na(+)-binding residues include I31 and D99. NAD(+)-binding positions include 159-161 (TPW) and 185-188 (KPSE). L189 provides a ligand contact to Na(+). 238-242 (GSGPT) serves as a coordination point for NAD(+). The active-site Proton acceptor is E260. L261 contributes to the NAD(+) binding site. The Nucleophile role is filled by C295. NAD(+) contacts are provided by E394 and W460.

It belongs to the aldehyde dehydrogenase family. Forms homodimers.

It carries out the reaction 4-aminobutanal + NAD(+) + H2O = 4-aminobutanoate + NADH + 2 H(+). The catalysed reaction is 3-aminopropanal + NAD(+) + H2O = beta-alanine + NADH + 2 H(+). The enzyme catalyses 4-(trimethylamino)butanal + NAD(+) + H2O = 4-(trimethylamino)butanoate + NADH + 2 H(+). It catalyses the reaction 4-guanidinobutanal + NAD(+) + H2O = 4-guanidinobutanoate + NADH + 2 H(+). Its pathway is amine and polyamine biosynthesis; betaine biosynthesis via choline pathway; betaine from betaine aldehyde: step 1/1. Dehydrogenase that catalyzes the oxidation of several aminoaldehydes. Metabolizes and detoxifies aldehyde products of polyamine degradation to non-toxic amino acids. Catalyzes the oxidation of 4-aminobutanal and 3-aminopropanal to 4-aminobutanoate and beta-alanine, respectively. Catalyzes the oxidation of 4-(trimethylamino)butanal and 4-guanidinobutanal to 4-trimethylammoniobutanoate and 4-guanidinobutanoate, respectively. This Solanum lycopersicum (Tomato) protein is Aminoaldehyde dehydrogenase 2.